Reading from the N-terminus, the 55-residue chain is Large ribosomal subunit protein bL33 (55 aa).

It belongs to the bacterial ribosomal protein bL33 family.

In Leifsonia xyli subsp. xyli (strain CTCB07), this protein is Large ribosomal subunit protein bL33.